Reading from the N-terminus, the 459-residue chain is Cysteine--tRNA ligase (459 aa).

Cysteine 28 contacts Zn(2+). The 'HIGH' region signature appears at valine 30 to histidine 40. Residues cysteine 209, histidine 234, and glutamate 238 each coordinate Zn(2+). The 'KMSKS' region signature appears at lysine 266–serine 270. ATP is bound at residue lysine 269.

Belongs to the class-I aminoacyl-tRNA synthetase family. As to quaternary structure, monomer. Zn(2+) is required as a cofactor.

The protein localises to the cytoplasm. It catalyses the reaction tRNA(Cys) + L-cysteine + ATP = L-cysteinyl-tRNA(Cys) + AMP + diphosphate. This chain is Cysteine--tRNA ligase (cysS), found in Haemophilus influenzae (strain ATCC 51907 / DSM 11121 / KW20 / Rd).